A 278-amino-acid chain; its full sequence is Orotidine 5'-phosphate decarboxylase (278 aa).

Catalysis depends on Lys96, which acts as the Proton donor.

The protein belongs to the OMP decarboxylase family. Type 2 subfamily.

It catalyses the reaction orotidine 5'-phosphate + H(+) = UMP + CO2. The protein operates within pyrimidine metabolism; UMP biosynthesis via de novo pathway; UMP from orotate: step 2/2. This chain is Orotidine 5'-phosphate decarboxylase (pyrF), found in Streptomyces coelicolor (strain ATCC BAA-471 / A3(2) / M145).